Consider the following 429-residue polypeptide: tRNA (guanine(9)-N1)-methyltransferase (429 aa).

The 249-residue stretch at 131–379 (KERKEAQRRI…AVIPIRKYAP (249 aa)) folds into the SAM-dependent MTase TRM10-type domain. S-adenosyl-L-methionine contacts are provided by residues 285-286 (LS), Gly-305, 309-313 (DRNRH), Cys-317, Leu-331, and 344-346 (KAL). The active-site Proton acceptor is the Asp-309. Positions 383 to 429 (AKRAKTETKRNEKVEEEVECTSAEGEEDIGVIEESAEVDPEDVFSNQ) are disordered. Basic and acidic residues predominate over residues 386–395 (AKTETKRNEK). A compositionally biased stretch (acidic residues) spans 396-429 (VEEEVECTSAEGEEDIGVIEESAEVDPEDVFSNQ).

This sequence belongs to the class IV-like SAM-binding methyltransferase superfamily. TRM10 family. Monomer.

The protein resides in the cytoplasm. It is found in the nucleus. The catalysed reaction is guanosine(9) in tRNA + S-adenosyl-L-methionine = N(1)-methylguanosine(9) in tRNA + S-adenosyl-L-homocysteine + H(+). Functionally, S-adenosyl-L-methionine-dependent guanine N(1)-methyltransferase that catalyzes the formation of N(1)-methylguanine at position 9 (m1G9) in cytoplasmic tRNA. This Cryptococcus neoformans var. neoformans serotype D (strain B-3501A) (Filobasidiella neoformans) protein is tRNA (guanine(9)-N1)-methyltransferase.